The following is a 271-amino-acid chain: Auxin-responsive protein IAA5 (271 aa).

A disordered region spans residues 1–96 (MSPPLEPHDY…RHGASSGSVA (96 aa)). Low complexity-rich tracts occupy residues 14 to 33 (SAAA…SPNP) and 40 to 50 (PRLTLRLGLPG). The EAR-like (transcriptional repression) signature appears at 44–48 (LRLGL). The PB1 domain occupies 151-255 (PLYVKVSMDG…RKLKIMRGSD (105 aa)).

It belongs to the Aux/IAA family. Homodimers and heterodimers.

It is found in the nucleus. Its function is as follows. Aux/IAA proteins are short-lived transcriptional factors that function as repressors of early auxin response genes at low auxin concentrations. In Oryza sativa subsp. japonica (Rice), this protein is Auxin-responsive protein IAA5 (IAA5).